Reading from the N-terminus, the 146-residue chain is Large ribosomal subunit protein uL15 (146 aa).

The disordered stretch occupies residues 1–56 (MGLRLNELSPGVGAKKTAQRRGRGIGSGLGKTGGRGVKGQKSRSGSSVRSGFEGGQ). Residues 24–37 (GIGSGLGKTGGRGV) are compositionally biased toward gly residues.

Belongs to the universal ribosomal protein uL15 family. As to quaternary structure, part of the 50S ribosomal subunit.

Binds to the 23S rRNA. This Psychrobacter arcticus (strain DSM 17307 / VKM B-2377 / 273-4) protein is Large ribosomal subunit protein uL15.